Consider the following 486-residue polypeptide: CDT1-like protein b (486 aa).

2 disordered regions span residues proline 273–serine 294 and valine 348–aspartate 371. The span at leucine 281–serine 294 shows a compositional bias: polar residues. The segment covering valine 348–tyrosine 363 has biased composition (basic and acidic residues).

The protein belongs to the Cdt1 family. Expressed in proliferating (e.g. shoot and root apical meristems, organ primordia, guard cells and stomatal lineage) and endoreplicating cells (e.g. developing trichomes).

It localises to the nucleus. Its function is as follows. Member of the pre-replication complex. Regulates endoreduplication. Involved in the coordination of cell and plastid division. In Arabidopsis thaliana (Mouse-ear cress), this protein is CDT1-like protein b (CDT1B).